An 841-amino-acid polypeptide reads, in one-letter code: Alpha-glucan phosphorylase 2, cytosolic (841 aa).

A disordered region spans residues 1–24 (MANANGKAATSLPEKISAKANPEA). Lys687 is modified (N6-(pyridoxal phosphate)lysine).

Belongs to the glycogen phosphorylase family. Pyridoxal 5'-phosphate is required as a cofactor.

Its subcellular location is the cytoplasm. The enzyme catalyses [(1-&gt;4)-alpha-D-glucosyl](n) + phosphate = [(1-&gt;4)-alpha-D-glucosyl](n-1) + alpha-D-glucose 1-phosphate. Functionally, phosphorylase is an important allosteric enzyme in carbohydrate metabolism. Enzymes from different sources differ in their regulatory mechanisms and in their natural substrates. However, all known phosphorylases share catalytic and structural properties. This Arabidopsis thaliana (Mouse-ear cress) protein is Alpha-glucan phosphorylase 2, cytosolic (PHS2).